Here is a 478-residue protein sequence, read N- to C-terminus: Ribosomal RNA small subunit methyltransferase F (478 aa).

S-adenosyl-L-methionine-binding positions include 121 to 127 (ASAPGSK), glutamate 145, aspartate 172, and aspartate 190. Cysteine 243 (nucleophile) is an active-site residue.

It belongs to the class I-like SAM-binding methyltransferase superfamily. RsmB/NOP family.

The protein localises to the cytoplasm. It catalyses the reaction cytidine(1407) in 16S rRNA + S-adenosyl-L-methionine = 5-methylcytidine(1407) in 16S rRNA + S-adenosyl-L-homocysteine + H(+). In terms of biological role, specifically methylates the cytosine at position 1407 (m5C1407) of 16S rRNA. The protein is Ribosomal RNA small subunit methyltransferase F of Shewanella woodyi (strain ATCC 51908 / MS32).